The primary structure comprises 373 residues: Lipoyl synthase (373 aa).

A disordered region spans residues 12 to 36 (HVVSNDHPSSSPLQPGVKQSGEDKI). Positions 81, 86, 92, 107, 111, 114, and 323 each coordinate [4Fe-4S] cluster. One can recognise a Radical SAM core domain in the interval 93–312 (FSHGTATFMI…EEYGMALGFS (220 aa)). Residues 346–373 (PAVSSTEHRERHTIASKSASKTESIRHR) form a disordered region.

It belongs to the radical SAM superfamily. Lipoyl synthase family. [4Fe-4S] cluster is required as a cofactor.

It is found in the cytoplasm. It carries out the reaction [[Fe-S] cluster scaffold protein carrying a second [4Fe-4S](2+) cluster] + N(6)-octanoyl-L-lysyl-[protein] + 2 oxidized [2Fe-2S]-[ferredoxin] + 2 S-adenosyl-L-methionine + 4 H(+) = [[Fe-S] cluster scaffold protein] + N(6)-[(R)-dihydrolipoyl]-L-lysyl-[protein] + 4 Fe(3+) + 2 hydrogen sulfide + 2 5'-deoxyadenosine + 2 L-methionine + 2 reduced [2Fe-2S]-[ferredoxin]. The protein operates within protein modification; protein lipoylation via endogenous pathway; protein N(6)-(lipoyl)lysine from octanoyl-[acyl-carrier-protein]: step 2/2. Functionally, catalyzes the radical-mediated insertion of two sulfur atoms into the C-6 and C-8 positions of the octanoyl moiety bound to the lipoyl domains of lipoate-dependent enzymes, thereby converting the octanoylated domains into lipoylated derivatives. In Xylella fastidiosa (strain 9a5c), this protein is Lipoyl synthase.